The primary structure comprises 35 residues: MSDINTTRLPFVFVASPPCVGDDIAMVLTRGENLC.

The propeptide occupies Met1–Pro10. The segment at residues Phe11–Pro18 is a cross-link (cyclopeptide (Phe-Pro)). The propeptide occupies Cys19–Cys35.

The protein belongs to the MSDIN fungal toxin family. Post-translationally, processed by the macrocyclase-peptidase enzyme POPB to yield a toxic cyclic octapeptide. POPB first removes 10 residues from the N-terminus. Conformational trapping of the remaining peptide forces the enzyme to release this intermediate rather than proceed to macrocyclization. The enzyme rebinds the remaining peptide in a different conformation and catalyzes macrocyclization of the N-terminal 8 residues. As to expression, expressed in basidiocarps.

Its function is as follows. Probable toxin that belongs to the MSDIN-like toxin family responsible for a large number of food poisoning cases and deaths. The protein is MSDIN-like toxin proprotein 6 of Amanita exitialis (Guangzhou destroying angel).